The sequence spans 159 residues: Protein-export protein SecB (159 aa).

This sequence belongs to the SecB family. In terms of assembly, homotetramer, a dimer of dimers. One homotetramer interacts with 1 SecA dimer.

Its subcellular location is the cytoplasm. One of the proteins required for the normal export of preproteins out of the cell cytoplasm. It is a molecular chaperone that binds to a subset of precursor proteins, maintaining them in a translocation-competent state. It also specifically binds to its receptor SecA. This is Protein-export protein SecB from Shewanella amazonensis (strain ATCC BAA-1098 / SB2B).